A 25-amino-acid polypeptide reads, in one-letter code: Dermaseptin-5.2TR (25 aa).

Valine 25 is subject to Valine amide.

In terms of tissue distribution, expressed by the skin glands.

The protein localises to the secreted. Has antimicrobial activity. The chain is Dermaseptin-5.2TR from Phyllomedusa trinitatis (Trinidad leaf frog).